The chain runs to 818 residues: Lon protease (818 aa).

The region spanning 14 to 216 (LPVLPLRDVV…KVFALIEREI (203 aa)) is the Lon N-terminal domain. 370-377 (GPPGVGKT) is a binding site for ATP. Positions 605–786 (ESLVGIVTGL…DEVIKVALMH (182 aa)) constitute a Lon proteolytic domain. Residues S692 and K735 contribute to the active site.

The protein belongs to the peptidase S16 family. As to quaternary structure, homohexamer. Organized in a ring with a central cavity.

It is found in the cytoplasm. The enzyme catalyses Hydrolysis of proteins in presence of ATP.. In terms of biological role, ATP-dependent serine protease that mediates the selective degradation of mutant and abnormal proteins as well as certain short-lived regulatory proteins. Required for cellular homeostasis and for survival from DNA damage and developmental changes induced by stress. Degrades polypeptides processively to yield small peptide fragments that are 5 to 10 amino acids long. Binds to DNA in a double-stranded, site-specific manner. This chain is Lon protease, found in Wolbachia pipientis subsp. Culex pipiens (strain wPip).